Here is a 451-residue protein sequence, read N- to C-terminus: Tubulin alpha-1 chain (451 aa).

Residue Gln-11 participates in GTP binding. Lys-40 is subject to N6-acetyllysine. GTP is bound by residues Glu-71, Thr-145, Thr-179, Asn-206, and Asn-228. Glu-71 provides a ligand contact to Mg(2+). Residue Glu-254 is part of the active site. Residues 429 to 451 (EKDYEEVGAESGEGEEGDEGEEY) are disordered. The segment covering 431–451 (DYEEVGAESGEGEEGDEGEEY) has biased composition (acidic residues).

Belongs to the tubulin family. As to quaternary structure, dimer of alpha and beta chains. A typical microtubule is a hollow water-filled tube with an outer diameter of 25 nm and an inner diameter of 15 nM. Alpha-beta heterodimers associate head-to-tail to form protofilaments running lengthwise along the microtubule wall with the beta-tubulin subunit facing the microtubule plus end conferring a structural polarity. Microtubules usually have 13 protofilaments but different protofilament numbers can be found in some organisms and specialized cells. Mg(2+) is required as a cofactor. Undergoes a tyrosination/detyrosination cycle, the cyclic removal and re-addition of a C-terminal tyrosine residue by the enzymes tubulin tyrosine carboxypeptidase (TTCP) and tubulin tyrosine ligase (TTL), respectively. In terms of processing, acetylation of alpha chains at Lys-40 stabilizes microtubules and affects affinity and processivity of microtubule motors. This modification has a role in multiple cellular functions, ranging from cell motility, cell cycle progression or cell differentiation to intracellular trafficking and signaling.

Its subcellular location is the cytoplasm. The protein resides in the cytoskeleton. The catalysed reaction is GTP + H2O = GDP + phosphate + H(+). In terms of biological role, tubulin is the major constituent of microtubules, a cylinder consisting of laterally associated linear protofilaments composed of alpha- and beta-tubulin heterodimers. Microtubules grow by the addition of GTP-tubulin dimers to the microtubule end, where a stabilizing cap forms. Below the cap, tubulin dimers are in GDP-bound state, owing to GTPase activity of alpha-tubulin. In Anemia phyllitidis (Fern), this protein is Tubulin alpha-1 chain (TUBA1).